A 683-amino-acid chain; its full sequence is DNA ligase (683 aa).

Residues 43-47 (DAEYD), 92-93 (SL), and glutamate 125 contribute to the NAD(+) site. The active-site N6-AMP-lysine intermediate is the lysine 127. NAD(+) contacts are provided by arginine 148, glutamate 185, lysine 303, and lysine 327. Zn(2+)-binding residues include cysteine 421, cysteine 424, cysteine 439, and cysteine 445. Residues 604–683 (IADNPLKGKN…QEFIALTGEN (80 aa)) enclose the BRCT domain.

This sequence belongs to the NAD-dependent DNA ligase family. LigA subfamily. Requires Mg(2+) as cofactor. The cofactor is Mn(2+).

It carries out the reaction NAD(+) + (deoxyribonucleotide)n-3'-hydroxyl + 5'-phospho-(deoxyribonucleotide)m = (deoxyribonucleotide)n+m + AMP + beta-nicotinamide D-nucleotide.. Its function is as follows. DNA ligase that catalyzes the formation of phosphodiester linkages between 5'-phosphoryl and 3'-hydroxyl groups in double-stranded DNA using NAD as a coenzyme and as the energy source for the reaction. It is essential for DNA replication and repair of damaged DNA. The protein is DNA ligase of Actinobacillus pleuropneumoniae serotype 5b (strain L20).